Here is a 293-residue protein sequence, read N- to C-terminus: N-acetylneuraminate lyase (293 aa).

S48 and S49 together coordinate aceneuramate. Y137 acts as the Proton donor in catalysis. The active-site Schiff-base intermediate with substrate is K165. The aceneuramate site is built by T167, G189, D191, E192, and S208.

It belongs to the DapA family. NanA subfamily. Homotetramer.

The protein resides in the cytoplasm. The catalysed reaction is aceneuramate = aldehydo-N-acetyl-D-mannosamine + pyruvate. Its pathway is amino-sugar metabolism; N-acetylneuraminate degradation; D-fructose 6-phosphate from N-acetylneuraminate: step 1/5. Functionally, catalyzes the reversible aldol cleavage of N-acetylneuraminic acid (sialic acid; Neu5Ac) to form pyruvate and N-acetylmannosamine (ManNAc) via a Schiff base intermediate. This is N-acetylneuraminate lyase from Staphylococcus aureus (strain Mu3 / ATCC 700698).